Reading from the N-terminus, the 473-residue chain is MKTLYSLRRFYHVETLFNGTLALAGRDQETTGFAWWAGNARLINLSGKLLGAHVAHAGLIVFWAGAMNLFEVAHFVPEKPMYEQGLILLPHLATLGWGVGPGGEVIDTFPYFVSGVLHLISSAVLGFGGIYHALLGPETLEESFPFFGYVWKDRNKMTTILGIHLILLGVGAFLLVFKALYFGGVYDTWAPGGGDVRKITNLTLSPSVIFGYLLKSPFGGEGWIVSVDDLEDIIEGHVWLGSICIFGGIWHILTKPFAWARRALVWSGEAYLSYSLAALSVCGFIACCFVWFNNTAYPSEFYGPTGPEASQAQAFTFLVRDQRLGANVGSAQGPTGLGKYLMRSPTGEVIFGGETMRFWDLRAPWLEPLRGPNGLDLSRLKKDIQPWQERRSAEYMTHAPLGSLNSVGGVATEINAVNYVSPRSWLSTSHFVLGFFLFVGHLWHAGRARAAAAGFEKGIDRDFEPVLSMTPLN.

A propeptide spanning residues Met-1 to Glu-14 is cleaved from the precursor. Thr-15 is subject to N-acetylthreonine. Residue Thr-15 is modified to Phosphothreonine. A run of 5 helical transmembrane segments spans residues Leu-69–Ala-93, Leu-134–Asn-155, Lys-178–Thr-200, Lys-255–Ser-275, and Trp-291–Ala-312. [CaMn4O5] cluster is bound at residue Glu-367. The chain crosses the membrane as a helical span at residues Arg-447 to Pro-471.

It belongs to the PsbB/PsbC family. PsbC subfamily. PSII is composed of 1 copy each of membrane proteins PsbA, PsbB, PsbC, PsbD, PsbE, PsbF, PsbH, PsbI, PsbJ, PsbK, PsbL, PsbM, PsbT, PsbX, PsbY, PsbZ, Psb30/Ycf12, at least 3 peripheral proteins of the oxygen-evolving complex and a large number of cofactors. It forms dimeric complexes. Binds multiple chlorophylls and provides some of the ligands for the Ca-4Mn-5O cluster of the oxygen-evolving complex. It may also provide a ligand for a Cl- that is required for oxygen evolution. PSII binds additional chlorophylls, carotenoids and specific lipids. is required as a cofactor.

It is found in the plastid. Its subcellular location is the chloroplast thylakoid membrane. Functionally, one of the components of the core complex of photosystem II (PSII). It binds chlorophyll and helps catalyze the primary light-induced photochemical processes of PSII. PSII is a light-driven water:plastoquinone oxidoreductase, using light energy to abstract electrons from H(2)O, generating O(2) and a proton gradient subsequently used for ATP formation. The polypeptide is Photosystem II CP43 reaction center protein (Crucihimalaya wallichii (Rock-cress)).